The chain runs to 118 residues: IgW heavy chain V region W26 (118 aa).

The 109-residue stretch at asparagine 1–threonine 109 folds into the Ig-like domain. Cysteine 22 and cysteine 93 are joined by a disulfide.

As to expression, expressed mainly in lymphoid tissues including spleen, epigonal organ and circulating lymphocytes.

This Heterodontus francisci (Horn shark) protein is IgW heavy chain V region W26.